A 492-amino-acid polypeptide reads, in one-letter code: GDP-Man:Man(3)GlcNAc(2)-PP-Dol alpha-1,2-mannosyltransferase (492 aa).

Residues 1 to 19 (MAADTGSWCVYAVLRFFYS) are Lumenal-facing. A helical transmembrane segment spans residues 20–40 (LFFPGLMICGVLCVYLVIGLW). Residues 41–233 (VIRWHLQRKK…SRNALLSKAK (193 aa)) lie on the Cytoplasmic side of the membrane. Positions 234–254 (LIYYYLFAFVYGLVGSCSDIV) form an intramembrane region, helical. Residues 255–399 (MVNSSWTLNH…IGLHTMWNEH (145 aa)) are Cytoplasmic-facing. Positions 400-420 (FGIGVVECMAAGTVILAHNSG) form an intramembrane region, helical. At 421–492 (GPKLDIVIPH…FLCSMEKLLT (72 aa)) the chain is on the cytoplasmic side.

Belongs to the glycosyltransferase group 1 family. Glycosyltransferase 4 subfamily.

It localises to the endoplasmic reticulum membrane. The enzyme catalyses an alpha-D-Man-(1-&gt;3)-[alpha-D-Man-(1-&gt;6)]-beta-D-Man-(1-&gt;4)-beta-D-GlcNAc-(1-&gt;4)-alpha-D-GlcNAc-diphospho-di-trans,poly-cis-dolichol + 2 GDP-alpha-D-mannose = an alpha-D-Man-(1-&gt;2)-alpha-D-Man-(1-&gt;2)-alpha-D-Man-(1-&gt;3)-[alpha-D-Man-(1-&gt;6)]-beta-D-Man-(1-&gt;4)-beta-D-GlcNAc-(1-&gt;4)-alpha-D-GlcNAc-diphospho-di-trans,poly-cis-dolichol + 2 GDP + 2 H(+). Its pathway is protein modification; protein glycosylation. In terms of biological role, GDP-Man:Man(3)GlcNAc(2)-PP-Dol alpha-1,2-mannosyltransferase that operates in the biosynthetic pathway of dolichol-linked oligosaccharides, the glycan precursors employed in protein asparagine (N)-glycosylation. The assembly of dolichol-linked oligosaccharides begins on the cytosolic side of the endoplasmic reticulum membrane and finishes in its lumen. The sequential addition of sugars to dolichol pyrophosphate produces dolichol-linked oligosaccharides containing fourteen sugars, including two GlcNAcs, nine mannoses and three glucoses. Once assembled, the oligosaccharide is transferred from the lipid to nascent proteins by oligosaccharyltransferases. Catalyzes, on the cytoplasmic face of the endoplasmic reticulum, the addition of the fourth and fifth mannose residues to the dolichol-linked oligosaccharide chain, to produce Man(5)GlcNAc(2)-PP-dolichol core oligosaccharide. Man(5)GlcNAc(2)-PP-dolichol is a substrate for ALG3, the following enzyme in the biosynthetic pathway. This Mus musculus (Mouse) protein is GDP-Man:Man(3)GlcNAc(2)-PP-Dol alpha-1,2-mannosyltransferase.